Consider the following 84-residue polypeptide: Beta-cardiotoxin CTX21 (84 aa).

Positions 1–21 (MKTLLLTLVVVTIVCLDLGYT) are cleaved as a signal peptide. 4 cysteine pairs are disulfide-bonded: cysteine 24/cysteine 43, cysteine 36/cysteine 61, cysteine 65/cysteine 76, and cysteine 77/cysteine 82.

Belongs to the three-finger toxin family. Short-chain subfamily. Aminergic toxin sub-subfamily. Expressed by the venom gland.

The protein localises to the secreted. Functionally, acts as a beta-blocker by binding to beta-1 and beta-2 adrenergic receptors (ADRB1 and ADRB2). It dose-dependently decreases the heart rate (bradycardia), whereas conventional cardiotoxins increases it. At 100 mg/kg, intraperitoneal injection into mice provokes labored breathing, impaired locomotion, lack of response to external stimuli, and death (after 30 minutes). The sequence is that of Beta-cardiotoxin CTX21 from Ophiophagus hannah (King cobra).